We begin with the raw amino-acid sequence, 925 residues long: MTTEQRRSLQAFQDYIRKTLDPTYILSYMAPWFREEEVQYIQAEKNNKGPMEAATLFLKFLLELQEEGWFRGFLDALDHAGYSGLYEAIESWDFKKIEKLEEYRLLLKRLQPEFKTRIIPTDIISDLSECLINQECEEILQICSTKGMMAGAEKLVECLLRSDKENWPKTLKLALEKERNKFSELWIVEKGIKDVETEDLEDKMETSDIQIFYQEDPECQNLSENSCPPSEVSDTNLYSPFKPRNYQLELALPAMKGKNTIICAPTGCGKTFVSLLICEHHLKKFPQGQKGKVVFFANQIPVYEQQKSVFSKYFERHGYRVTGISGATAENVPVEQIVENNDIIILTPQILVNNLKKGTIPSLSIFTLMIFDECHNTSKQHPYNMIMFNYLDQKLGGSSGPLPQVIGLTASVGVGDAKNTDEALDYICKLCASLDASVIATVKHNLEELEQVVYKPQKFFRKVESRISDKFKYIIAQLMRDTESLAKRICKDLENLSQIQNREFGTQKYEQWIVTVQKACMVFQMPDKDEESRICKALFLYTSHLRKYNDALIISEHARMKDALDYLKDFFSNVRAAGFDEIEQDLTQRFEEKLQELESVSRDPSNENPKLEDLCFILQEEYHLNPETITILFVKTRALVDALKNWIEGNPKLSFLKPGILTGRGKTNQNTGMTLPAQKCILDAFKASGDHNILIATSVADEGIDIAQCNLVILYEYVGNVIKMIQTRGRGRARGSKCFLLTSNAGVIEKEQINMYKEKMMNDSILRLQTWDEAVFREKILHIQTHEKFIRDSQEKPKPVPDKENKKLLCRKCKALACYTADVRVIEECHYTVLGDAFKECFVSRPHPKPKQFSSFEKRAKIFCARQNCSHDWGIHVKYKTFEIPVIKIESFVVEDIATGVQTLYSKWKDFHFEKIPFDPAEMSK.

CARD domains follow at residues 1-87 (MTTE…GLYE) and 92-172 (WDFK…KTLK). S8 is modified ((Microbial infection) Phosphoserine). S8 is modified (phosphoserine). Glycyl lysine isopeptide (Lys-Gly) (interchain with G-Cter in ubiquitin) cross-links involve residues K48, K96, K154, and K164. T170 is subject to Phosphothreonine. Residues K172, K181, K193, and K203 each participate in a glycyl lysine isopeptide (Lys-Gly) (interchain with G-Cter in ubiquitin) cross-link. Residues 218 to 925 (ECQNLSENSC…IPFDPAEMSK (708 aa)) form an interaction with ZC3HAV1 region. The Helicase ATP-binding domain maps to 251–430 (ALPAMKGKNT…DEALDYICKL (180 aa)). 264–271 (APTGCGKT) is a binding site for ATP. Residues 372 to 375 (DECH) carry the DECH box motif. A (Microbial infection) Deamidated asparagine; by herpes simplex virus 1/HHV-1 UL37 mark is found at N495 and N549. The 167-residue stretch at 610-776 (KLEDLCFILQ…RLQTWDEAVF (167 aa)) folds into the Helicase C-terminal domain. The tract at residues 735 to 925 (GSKCFLLTSN…IPFDPAEMSK (191 aa)) is mediates interaction with RNF135. The residue at position 770 (T770) is a Phosphothreonine; by CK2. The RLR CTR domain maps to 794–925 (QEKPKPVPDK…IPFDPAEMSK (132 aa)). C810 serves as a coordination point for Zn(2+). K812 participates in a covalent cross-link: Glycyl lysine isopeptide (Lys-Gly) (interchain with G-Cter in ubiquitin). A Zn(2+)-binding site is contributed by C813. S854 and S855 each carry phosphoserine; by CK2. K858 is modified (N6-acetyllysine). C864 and C869 together coordinate Zn(2+). An N6-acetyllysine modification is found at K909.

This sequence belongs to the helicase family. RLR subfamily. In terms of assembly, monomer; maintained as a monomer in an autoinhibited state. Upon binding of viral RNAs and conformational shift, homooligomerizes and forms filaments on these molecules. Interacts (via tandem CARD domain) with MAVS/IPS1 promoting its filamentation. Interacts with DHX58/LGP2, IKBKE, TBK1 and STING1. Interacts (via CARD domain) with TRIM25 (via SPRY domain). Interacts (double-stranded RNA-bound oligomeric form) with RNF135 (homodimer); involved in RNA length-dependent activation of the RIG-I signaling pathway. Interacts with CYLD. Interacts with NLRC5; blocks the interaction of MAVS/IPS1 to RIGI. Interacts with SRC. Interacts with DDX60. Interacts with isoform 2 of ZC3HAV1 (via zinc-fingers) in an RNA-dependent manner. Interacts (via tandem CARD domain) with SEC14L1; the interaction is direct and impairs the interaction of RIGI with MAVS/IPS1. Interacts with VCP/p97; interaction is direct and allows the recruitment of RNF125 and subsequent ubiquitination and degradation. Interacts with NOP53; may regulate RIGI through USP15-mediated 'Lys-63'-linked deubiquitination. Interacts with SIGLEC10, CBL and PTPN11; within a negative feedback loop leading to RIGI degradation. Interacts with LRRC25. Interacts with ZCCHC3; leading to activation of RIGI. Interacts with RNF123. Interacts with UBE2D3 and UBE2N; E2 ubiquitin ligases involved in RNF135-mediated ubiquitination of RIGI and activation of the RIG-I signaling pathway. Interacts with IFIT3. Interacts with DDX3X. Interacts with RTN3. Interacts with ARL16; this interaction is GTP-dependent and induced upon viral infection; this interaction suppresses the RNA sensing activity of RIGI. Interacts with DHX16; this interaction enhances RIGI-mediated antiviral response. Interacts with IRGM; promoting RIGI degradation. Interacts with IFI6; this interaction inhibits RIGI activation. Interacts with ECSIT; this interaction bridges RIGI to the MAVS complex at the mitochondrion. Interacts with YWHAE; this interaction drives RIGI at the mitochondrion. As to quaternary structure, (Microbial infection) Interacts with protein Z of Guanarito virus, Machupo virus, Junin arenavirus and Sabia virus. This interaction disrupts its interaction with MAVS/IPS1, impeding downstream IRF3 and NF-kappa-B activation and resulting in decreased IFN-beta induction. (Microbial infection) Interacts (via CARD domain) with Human respiratory syncytial virus A non-structural protein 2 (NS2) and this interaction disrupts its interaction with MAVS/IPS1, impeding downstream IRF3 activation. In terms of assembly, (Microbial infection) Interacts with Rotavirus A non-structural protein 1 (NSP1) and this interaction induces down-regulation of RIGI. As to quaternary structure, (Microbial infection) Interacts with paramyxoviruses (Sendai virus, Nipah virus, Measles virus and Parainfluenza virus 5) protein V; this interaction inhibits TRIM25-mediated ubiquitination of RIG-I and prevents downstream RIG-I signaling thereby inhibiting the IFN responses. (Microbial infection) Interacts with herpes simplex virus 1 protein US11; this interaction prevents the interaction of MAVS/IPS1 to RIGI. In terms of assembly, (Microbial infection) Interacts with herpes simplex virus 1 protein UL37; this interaction deaminates RIGI and inhibits its activation. As to quaternary structure, (Microbial infection) Interacts with Severe fever with thrombocytopenia virus (SFTSV) NSs; this interaction this interaction sequesters RIGI in NSs-induced cytoplasmic inclusion bodies thereby inhibiting the IFN responses. Post-translationally, phosphorylated in resting cells and dephosphorylated in RNA virus-infected cells. Phosphorylation at Thr-770, Ser-854 and Ser-855 results in inhibition of its activity while dephosphorylation at these sites results in its activation. Ubiquitinated. 'Lys-63' ubiquitination by RNF135, which occurs after RNA-binding and homodimerization, releases the autoinhibition of the CARD domains by the RLR CTR domain, an essential step in the activation of the RIG-I signaling pathway. Lys-172 is the critical site of ubiquitination for MAVS/IPS1 binding and to induce anti-viral signal transduction. Lys-154, Lys-164 and Lys-172 are shared sites for RNF135-mediated and TRIM4-mediated ubiquitination. Also undergoes 'Lys-48' ubiquitination at Lys-181 by RNF125 that leads to proteasomal degradation. 'Lys-48' ubiquitination follows viral infection and is enhanced by 'Lys-63'-linked ubiquitination of the CARD domains that promotes interaction with VCP/p97 and subsequent recruitment of RNF125. Within a negative feedback loop involving SIGLEC10 and PTPN11, 'Lys-48' ubiquitination at Lys-812 by CBL also elicits the proteasomal degradation of RIGI. Deubiquitinated by CYLD, a protease that selectively cleaves 'Lys-63'-linked ubiquitin chains. Also probably deubiquitinated by USP17L2/USP17 that cleaves 'Lys-48'- and 'Lys-63'-linked ubiquitin chains and positively regulates the receptor. Ubiquitinated by TRIM40 via 'Lys-48'-linked ubiquitination; leading to proteasomal degradation. Deubiquitinated by USP27X that cleaves 'Lys-63'-linked ubiquitin chains and inhibits the innate immune receptor activity. Deubiquitinated by USP3 that also cleaves 'Lys-63'-linked ubiquitin chains and inhibits the innate immune receptor activity. Undergoes 'Lys-48'-linked ubiquitination catalyzed by MARCHF5 at Lys-193 and Lys-203, leading to proteasomal degradation. In terms of processing, phosphorylated at Ser-8 and Thr-170; these phosphorylations suppresse the TRIM25-mediated 'Lys-63'-linked ubiquitination of RIG-I and thereby prevents RIG-I downstream signaling. Dephosphorylated by phosphatases PPP1CA/PPP1CC; this step is essential to activate RIGI and initiate downstream signaling. Post-translationally, ISGylated. Conjugated to ubiquitin-like protein ISG15 upon IFN-beta stimulation. ISGylation negatively regulates its function in antiviral signaling response. Sumoylated, probably by MUL1; inhibiting its polyubiquitination. In terms of processing, acetylated in response to RNA virus infection. Deacetylated by HDAC6 in the presence of viral mRNAs which is required for detection of viral RNA by RIGI. Post-translationally, (Microbial infection) Deamidated on Asn-495 and Asn-549 by herpes simplex virus 1 protein UL37. These modifications eliminate RIGI detection of viral RNA and restriction of viral replication. Degraded via selective autophagy following interaction with IRGM. IRGM promotes RIGI recruitment to autophagosome membranes, promoting its SQSTM1/p62-dependent autophagic degradation. In terms of processing, (Microbial infection) Cleaved by the protease 3C of coxsackievirus B3, poliovirus and enterovirus 71 allowing the virus to disrupt the host type I interferon production. Post-translationally, (Microbial infection) Phosphorylated at Ser-8 by herpes simplex virus 1 protein US3 leading to inhibition of critical RIGI activation steps. As to expression, present in vascular smooth cells (at protein level).

It is found in the cytoplasm. The protein localises to the cell projection. Its subcellular location is the ruffle membrane. It localises to the cytoskeleton. The protein resides in the cell junction. It is found in the tight junction. It catalyses the reaction ATP + H2O = ADP + phosphate + H(+). Its function is as follows. Innate immune receptor that senses cytoplasmic viral nucleic acids and activates a downstream signaling cascade leading to the production of type I interferons and pro-inflammatory cytokines. Forms a ribonucleoprotein complex with viral RNAs on which it homooligomerizes to form filaments. The homooligomerization allows the recruitment of RNF135 an E3 ubiquitin-protein ligase that activates and amplifies the RIG-I-mediated antiviral signaling in an RNA length-dependent manner through ubiquitination-dependent and -independent mechanisms. Upon activation, associates with mitochondria antiviral signaling protein (MAVS/IPS1) that activates the IKK-related kinases TBK1 and IKBKE which in turn phosphorylate the interferon regulatory factors IRF3 and IRF7, activating transcription of antiviral immunological genes including the IFN-alpha and IFN-beta interferons. Ligands include 5'-triphosphorylated ssRNAs and dsRNAs but also short dsRNAs (&lt;1 kb in length). In addition to the 5'-triphosphate moiety, blunt-end base pairing at the 5'-end of the RNA is very essential. Overhangs at the non-triphosphorylated end of the dsRNA RNA have no major impact on its activity. A 3'overhang at the 5'triphosphate end decreases and any 5'overhang at the 5' triphosphate end abolishes its activity. Detects both positive and negative strand RNA viruses including members of the families Paramyxoviridae: Human respiratory syncytial virus and measles virus (MeV), Rhabdoviridae: vesicular stomatitis virus (VSV), Orthomyxoviridae: influenza A and B virus, Flaviviridae: Japanese encephalitis virus (JEV), hepatitis C virus (HCV), dengue virus (DENV) and west Nile virus (WNV). It also detects rotaviruses and reoviruses. Detects and binds to SARS-CoV-2 RNAs which is inhibited by m6A RNA modifications. Also involved in antiviral signaling in response to viruses containing a dsDNA genome such as Epstein-Barr virus (EBV). Detects dsRNA produced from non-self dsDNA by RNA polymerase III, such as Epstein-Barr virus-encoded RNAs (EBERs). May play important roles in granulocyte production and differentiation, bacterial phagocytosis and in the regulation of cell migration. The chain is Antiviral innate immune response receptor RIG-I from Homo sapiens (Human).